A 426-amino-acid polypeptide reads, in one-letter code: MLRLDSSDDKQHLVIRSAGGRGKAAEYSFGIEEEYFLADRRSLDVAIQTPNELFESANWSTGGQAMREMLQSQLEVATNVHVDVNDAREELRFLRREVANVAAQYGFVIMACGTHPTAVWRMSQPSPKPRYEEMIEDLRSIGHRNMMCGMHVHVQLPDPEKRMAVMRAMLPHLPLFIALSASSPFWNSHKTGLKGYRLAAYSELPRTGLPELFESRHDYDEYVGALQRSGVIPDESHIWWAMRPSMKHPTLELRAPDTCTFVDDAVAIASLYRCLTRHLYRRPHLSKTVTVVERAIAVENKWRAQRYGTDCIFASKDGPITISELLSRLIDDIVEDADALNCAAEVEHCRTIVERGSSAEFQLRAYRENGNDIAAVSRWIAASTISGRALRSDAPRLRRHSARASFGNDNGIPEFAVSRAVSWRKA.

Belongs to the glutamate--cysteine ligase type 2 family. YbdK subfamily.

It catalyses the reaction L-cysteine + L-glutamate + ATP = gamma-L-glutamyl-L-cysteine + ADP + phosphate + H(+). ATP-dependent carboxylate-amine ligase which exhibits weak glutamate--cysteine ligase activity. In Bradyrhizobium diazoefficiens (strain JCM 10833 / BCRC 13528 / IAM 13628 / NBRC 14792 / USDA 110), this protein is Putative glutamate--cysteine ligase 2.